Reading from the N-terminus, the 198-residue chain is Recombination protein RecR (198 aa).

The segment at 57 to 72 (CEKCNTFTEAQICEVC) adopts a C4-type zinc-finger fold. One can recognise a Toprim domain in the interval 80–175 (TLLCVVETPA…AVTRLARGVP (96 aa)).

This sequence belongs to the RecR family.

Functionally, may play a role in DNA repair. It seems to be involved in an RecBC-independent recombinational process of DNA repair. It may act with RecF and RecO. This is Recombination protein RecR from Burkholderia vietnamiensis (strain G4 / LMG 22486) (Burkholderia cepacia (strain R1808)).